Here is a 67-residue protein sequence, read N- to C-terminus: Putative cytosolic sulfotransferase 2 (67 aa).

A 3'-phosphoadenylyl sulfate-binding site is contributed by 31-33 (RDG).

The protein belongs to the sulfotransferase 1 family.

Its subcellular location is the cytoplasm. In terms of biological role, sulfotransferase that utilizes 3'-phospho-5'-adenylyl sulfate (PAPS) as sulfonate donor. This chain is Putative cytosolic sulfotransferase 2 (SOT2), found in Arabidopsis thaliana (Mouse-ear cress).